The following is a 217-amino-acid chain: CXXC-type zinc finger protein 4 (217 aa).

The disordered stretch occupies residues 1 to 20 (MHRNDSQRLGKPGGAPESLQ). The segment at 122–163 (AKKKRKRCGVCVPCKRLINCGVCSSCRNRKTGHQICKFRKCE) adopts a CXXC-type zinc-finger fold. Cysteine 129, cysteine 132, cysteine 135, cysteine 141, cysteine 144, cysteine 147, cysteine 157, and cysteine 162 together coordinate Zn(2+).

The protein localises to the cytoplasm. Its function is as follows. Acts as a negative regulator of the Wnt signaling pathway required for anterior neural structure formation. Ectopic expression induces ventralization. Binds preferentially to DNA containing cytidine-phosphate-guanosine (CpG) dinucleotides over CpH (H=A, T, and C), hemimethylated-CpG and hemimethylated-hydroxymethyl-CpG. The polypeptide is CXXC-type zinc finger protein 4 (cxxc4) (Xenopus laevis (African clawed frog)).